The sequence spans 1561 residues: Rho GTPase-activating protein 190 (1561 aa).

FF domains are found at residues 252-320 (YQES…HMKK), 365-419 (YLQN…YLNS), 426-480 (KIGW…HQDD), and 482-547 (IEKS…HLRF). Residues 592-765 (SGSDRTLNLL…EPYPSNHTDL (174 aa)) form the pG1 pseudoGTPase domain. Residues 766-926 (RILCCIFCGD…LKTAWDNKYE (161 aa)) enclose the pG2 pseudoGTPase domain. Ser973, Ser975, Ser985, Ser988, and Ser996 each carry phosphoserine. The disordered stretch occupies residues 1054–1074 (KIRPKGPSQTLKVGEAPSRNC). One can recognise a Rho-GAP domain in the interval 1349–1552 (AQFGKLMITS…TMIDQFPYLF (204 aa)).

With respect to regulation, negatively regulated by integrin, bsk and Src/Src64B. Functionally, GTPase-activating protein (GAP) for RhoA/Rho1 that plays an essential role in the stability of dorsal branches of mushroom body (MB) neurons. The MB neurons are the center for olfactory learning and memory. Acts by converting RhoA/Rho1 to an inactive GDP-bound state, leading to repress the RhoA/Rho1-Drok-MRLC signaling pathway thereby maintaining axon branch stability. The sequence is that of Rho GTPase-activating protein 190 (RhoGAPp190) from Drosophila melanogaster (Fruit fly).